A 671-amino-acid polypeptide reads, in one-letter code: UvrABC system protein B (671 aa).

The Helicase ATP-binding domain maps to 31–189 (KGFEEGKKEQ…QLVDIQFDRN (159 aa)). 44–51 (GATGTGKT) is a binding site for ATP. The Beta-hairpin signature appears at 97–120 (YYDYYQPEAYVPSTDTYIEKDSAI). Residues 437–599 (QIDDLVGEIN…ITPKTIIKPI (163 aa)) form the Helicase C-terminal domain. The 36-residue stretch at 634-669 (KELVANLRSQMQAAAKKLDFEQAASLRDTILELQAD) folds into the UVR domain.

It belongs to the UvrB family. In terms of assembly, forms a heterotetramer with UvrA during the search for lesions. Interacts with UvrC in an incision complex.

It localises to the cytoplasm. Functionally, the UvrABC repair system catalyzes the recognition and processing of DNA lesions. A damage recognition complex composed of 2 UvrA and 2 UvrB subunits scans DNA for abnormalities. Upon binding of the UvrA(2)B(2) complex to a putative damaged site, the DNA wraps around one UvrB monomer. DNA wrap is dependent on ATP binding by UvrB and probably causes local melting of the DNA helix, facilitating insertion of UvrB beta-hairpin between the DNA strands. Then UvrB probes one DNA strand for the presence of a lesion. If a lesion is found the UvrA subunits dissociate and the UvrB-DNA preincision complex is formed. This complex is subsequently bound by UvrC and the second UvrB is released. If no lesion is found, the DNA wraps around the other UvrB subunit that will check the other stand for damage. This is UvrABC system protein B from Lacticaseibacillus casei (strain BL23) (Lactobacillus casei).